The sequence spans 414 residues: L-cysteine:1D-myo-inositol 2-amino-2-deoxy-alpha-D-glucopyranoside ligase (414 aa).

Zn(2+) is bound at residue Cys-43. Residues 43 to 46 (CGIT), Thr-58, and 81 to 83 (NIT) contribute to the L-cysteinyl-5'-AMP site. Positions 45–55 (ITPYDATHLGH) match the 'HIGH' region motif. A 'ERGGDP' region motif is present at residues 189–194 (ERGGDP). Residue Trp-229 participates in L-cysteinyl-5'-AMP binding. Zn(2+) is bound at residue Cys-233. Residue 251–253 (GSD) participates in L-cysteinyl-5'-AMP binding. His-258 is a Zn(2+) binding site. Residue Ile-285 coordinates L-cysteinyl-5'-AMP. The short motif at 291–295 (KMSKS) is the 'KMSKS' region element.

It belongs to the class-I aminoacyl-tRNA synthetase family. MshC subfamily. In terms of assembly, monomer. Zn(2+) is required as a cofactor.

It catalyses the reaction 1D-myo-inositol 2-amino-2-deoxy-alpha-D-glucopyranoside + L-cysteine + ATP = 1D-myo-inositol 2-(L-cysteinylamino)-2-deoxy-alpha-D-glucopyranoside + AMP + diphosphate + H(+). Functionally, catalyzes the ATP-dependent condensation of GlcN-Ins and L-cysteine to form L-Cys-GlcN-Ins. In Mycobacterium bovis (strain ATCC BAA-935 / AF2122/97), this protein is L-cysteine:1D-myo-inositol 2-amino-2-deoxy-alpha-D-glucopyranoside ligase (mshC).